The chain runs to 227 residues: Cytidylate kinase (227 aa).

An ATP-binding site is contributed by 12–20 (GPSGSGKGT).

This sequence belongs to the cytidylate kinase family. Type 1 subfamily.

The protein resides in the cytoplasm. The enzyme catalyses CMP + ATP = CDP + ADP. It catalyses the reaction dCMP + ATP = dCDP + ADP. The sequence is that of Cytidylate kinase from Nitrosococcus oceani (strain ATCC 19707 / BCRC 17464 / JCM 30415 / NCIMB 11848 / C-107).